The chain runs to 262 residues: Iso-A82775C biosynthesis cluster protein B (262 aa).

Part of the gene cluster that mediates the biosynthesis of iso-A82775C, a enylepoxycyclohexane and biosynthetic precursor of the chloropestolide anticancer natural products. Within the cluster, the prenyltransferase iacE prenylates siccayne to generate pestalodiol E, using dimethylallyl diphosphate (DMAPP) as cosubstrate. The probable oxidoreductase iacF is then involved in the epoxidation of pestalodiol F to pestalodiol F, which is further converted to pestalofone A by the short-chain dehydrogenase/reductase iacG. Iso-A82775C is subsequently generated from pestalofone A by the short-chain dehydrogenase/reductase iacC. Iso-A82775C is further condensed with maldoxin via a Diels-Alder reaction to produce the anticancer natural products chloropestolides A to E. This Pestalotiopsis fici (strain W106-1 / CGMCC3.15140) protein is Iso-A82775C biosynthesis cluster protein B.